A 470-amino-acid chain; its full sequence is Meiosis-specific with OB domain-containing protein (470 aa).

Residues 167-272 (IINVLAAVRS…EANILLNFIR (106 aa)) constitute a DNA-binding region (OB).

This sequence belongs to the MEIOB family. As to quaternary structure, component of a multiprotein complex with RPA2 and SPATA22. Interacts with SPATA22. Interacts with the complex BRME1:HSF2BP:BRCA2.

It localises to the cytoplasm. It is found in the nucleus. The protein localises to the chromosome. Single-stranded DNA-binding protein required for homologous recombination in meiosis I. Required for double strand breaks (DSBs) repair and crossover formation and promotion of faithful and complete synapsis. Not required for the initial loading of recombinases but required to maintain a proper number of RAD51 and DMC1 foci after the zygotene stage. May act by ensuring the stabilization of recombinases, which is required for successful homology search and meiotic recombination. Displays Single-stranded DNA 3'-5' exonuclease activity in vitro. This Rattus norvegicus (Rat) protein is Meiosis-specific with OB domain-containing protein.